Reading from the N-terminus, the 413-residue chain is ATP phosphoribosyltransferase 2, chloroplastic (413 aa).

A chloroplast-targeting transit peptide spans 1–57 (MPISIPLNATLQYSSPSSSSSSSSLVPSSPLFSPIPSTTVSLTGIRQRCLRMVTSCV).

Belongs to the ATP phosphoribosyltransferase family. Long subfamily. The cofactor is Mg(2+).

The protein localises to the plastid. It localises to the chloroplast. The enzyme catalyses 1-(5-phospho-beta-D-ribosyl)-ATP + diphosphate = 5-phospho-alpha-D-ribose 1-diphosphate + ATP. It participates in amino-acid biosynthesis; L-histidine biosynthesis; L-histidine from 5-phospho-alpha-D-ribose 1-diphosphate: step 1/9. With respect to regulation, feedback inhibited by L-histidine. Functionally, catalyzes the condensation of ATP and 5-phosphoribose 1-diphosphate to form N'-(5'-phosphoribosyl)-ATP (PR-ATP). This Arabidopsis thaliana (Mouse-ear cress) protein is ATP phosphoribosyltransferase 2, chloroplastic (HISN1B).